Reading from the N-terminus, the 465-residue chain is Tubulin gamma chain (465 aa).

144–150 (AGGTGSG) is a binding site for GTP.

Belongs to the tubulin family.

It localises to the cytoplasm. The protein localises to the cytoskeleton. The protein resides in the microtubule organizing center. Its subcellular location is the spindle pole body. Its function is as follows. Tubulin is the major constituent of microtubules. The gamma chain is found at microtubule organizing centers (MTOC) such as the spindle poles or the centrosome, suggesting that it is involved in the minus-end nucleation of microtubule assembly. In Candida glabrata (strain ATCC 2001 / BCRC 20586 / JCM 3761 / NBRC 0622 / NRRL Y-65 / CBS 138) (Yeast), this protein is Tubulin gamma chain (TUB4).